Reading from the N-terminus, the 153-residue chain is Myosin regulatory light chain, smooth muscle (153 aa).

EF-hand domains follow at residues 12-47 (SQIQ…LGRG), 81-116 (DPEE…QADR), and 117-152 (FSQS…GQEE). Positions 25, 27, 29, and 36 each coordinate Ca(2+).

Functionally, in molluscan muscle, calcium regulation is associated with myosin rather than with actin. Muscle myosin contains two types of light chains: the catalytic light chain, essential for ATPase activity, and the regulatory light chain, a calcium-binding protein responsible for Ca(2+) dependent binding and Ca(2+) dependent Mg-ATPase activity. This chain is Myosin regulatory light chain, smooth muscle, found in Halocynthia roretzi (Sea squirt).